The following is a 409-amino-acid chain: L-cysteine:1D-myo-inositol 2-amino-2-deoxy-alpha-D-glucopyranoside ligase (409 aa).

Cys43 lines the Zn(2+) pocket. L-cysteinyl-5'-AMP is bound by residues 43-46 (CGIT), Thr58, and 81-83 (NVT). The 'HIGH' region motif lies at 45 to 55 (ITPYDATHMGH). The 'ERGGDP' region signature appears at 183–188 (ERGGDP). Residue Trp224 participates in L-cysteinyl-5'-AMP binding. Position 228 (Cys228) interacts with Zn(2+). L-cysteinyl-5'-AMP is bound at residue 246–248 (GSD). Position 253 (His253) interacts with Zn(2+). Val280 is a binding site for L-cysteinyl-5'-AMP. The 'KMSKS' region motif lies at 286-290 (KMSKS).

It belongs to the class-I aminoacyl-tRNA synthetase family. MshC subfamily. Monomer. Zn(2+) is required as a cofactor.

It carries out the reaction 1D-myo-inositol 2-amino-2-deoxy-alpha-D-glucopyranoside + L-cysteine + ATP = 1D-myo-inositol 2-(L-cysteinylamino)-2-deoxy-alpha-D-glucopyranoside + AMP + diphosphate + H(+). Its function is as follows. Catalyzes the ATP-dependent condensation of GlcN-Ins and L-cysteine to form L-Cys-GlcN-Ins. In Streptomyces griseus subsp. griseus (strain JCM 4626 / CBS 651.72 / NBRC 13350 / KCC S-0626 / ISP 5235), this protein is L-cysteine:1D-myo-inositol 2-amino-2-deoxy-alpha-D-glucopyranoside ligase.